The sequence spans 492 residues: MVPVIALVGRPNVGKSTLFNRLTRSRDAIVGDLSGLTRDRQYGEAKWQGRTYIVIDTGGISGDEEGIDAKMAEQSLQAIEEADAVLFLVDARAGMTASDQMIGEHLRRRNKRSFLVVNKVDNLDVDLARAEFSPMGLGEPLAIAGAHGRGITQMLEAVLGIFPKDAGEPEEGAEAEEEVQEGQEAKRIPGPSEKDGIKLAIIGRPNVGKSTLVNRMLGEERVIVYDQAGTTRDSIYIPFERDDEKYTLIDTAGVRRRGKIFEAVEKFSVVKTLQAIQDSNVVVFVMDAREGVVDHDLNLLGFVLESGRALVIALNKWDGMDQGQKDYVKTELERRLFFVDFADIHFISALHGTGVGHLYKSVQAAFHSAVTRWPTSRLTQILEDAVSDHAPPLVNGRRIKLRYAHLGGANPPLIVIHGNQVDAVPRAYTRYLENTFRRVLKLVGTPIRIEYKGGENPYEGNKNKLTDRQVNKKRRLMSHHKKAEKKRKDKRK.

The region spanning 3 to 166 (PVIALVGRPN…AVLGIFPKDA (164 aa)) is the EngA-type G 1 domain. Residues 9–16 (GRPNVGKS), 56–60 (DTGGI), and 118–121 (NKVD) each bind GTP. The tract at residues 166-190 (AGEPEEGAEAEEEVQEGQEAKRIPG) is disordered. Residues 168–181 (EPEEGAEAEEEVQE) are compositionally biased toward acidic residues. Positions 197–370 (IKLAIIGRPN…SVQAAFHSAV (174 aa)) constitute an EngA-type G 2 domain. GTP contacts are provided by residues 203–210 (GRPNVGKS), 250–254 (DTAGV), and 315–318 (NKWD). A KH-like domain is found at 371–455 (TRWPTSRLTQ…PIRIEYKGGE (85 aa)). The disordered stretch occupies residues 453-492 (GGENPYEGNKNKLTDRQVNKKRRLMSHHKKAEKKRKDKRK). Residues 461–470 (NKNKLTDRQV) are compositionally biased toward basic and acidic residues. A compositionally biased stretch (basic residues) spans 471–492 (NKKRRLMSHHKKAEKKRKDKRK).

This sequence belongs to the TRAFAC class TrmE-Era-EngA-EngB-Septin-like GTPase superfamily. EngA (Der) GTPase family. Associates with the 50S ribosomal subunit.

Functionally, GTPase that plays an essential role in the late steps of ribosome biogenesis. This chain is GTPase Der, found in Ectopseudomonas mendocina (strain ymp) (Pseudomonas mendocina).